The primary structure comprises 255 residues: Small ribosomal subunit protein eS1 (255 aa).

Alanine 2 is modified (N-acetylalanine; partial).

It belongs to the eukaryotic ribosomal protein eS1 family. As to quaternary structure, component of the small ribosomal subunit. Mature ribosomes consist of a small (40S) and a large (60S) subunit. The 40S subunit contains about 33 different proteins and 1 molecule of RNA (18S). The 60S subunit contains about 49 different proteins and 3 molecules of RNA (25S, 5.8S and 5S).

It is found in the cytoplasm. This chain is Small ribosomal subunit protein eS1, found in Kluyveromyces lactis (strain ATCC 8585 / CBS 2359 / DSM 70799 / NBRC 1267 / NRRL Y-1140 / WM37) (Yeast).